The primary structure comprises 689 residues: Glycine--tRNA ligase beta subunit (689 aa).

This sequence belongs to the class-II aminoacyl-tRNA synthetase family. Tetramer of two alpha and two beta subunits.

The protein localises to the cytoplasm. It catalyses the reaction tRNA(Gly) + glycine + ATP = glycyl-tRNA(Gly) + AMP + diphosphate. In Escherichia coli O127:H6 (strain E2348/69 / EPEC), this protein is Glycine--tRNA ligase beta subunit.